The sequence spans 372 residues: Glutamate 5-kinase (372 aa).

Lys-14 lines the ATP pocket. Substrate-binding residues include Ser-54, Asp-141, and Asn-153. An ATP-binding site is contributed by 173-174 (TD). Residues 280-358 (RGHVVIDDGA…GEIESVLGYM (79 aa)) enclose the PUA domain.

Belongs to the glutamate 5-kinase family.

The protein resides in the cytoplasm. It catalyses the reaction L-glutamate + ATP = L-glutamyl 5-phosphate + ADP. The protein operates within amino-acid biosynthesis; L-proline biosynthesis; L-glutamate 5-semialdehyde from L-glutamate: step 1/2. Its function is as follows. Catalyzes the transfer of a phosphate group to glutamate to form L-glutamate 5-phosphate. The chain is Glutamate 5-kinase from Paraburkholderia phytofirmans (strain DSM 17436 / LMG 22146 / PsJN) (Burkholderia phytofirmans).